Here is a 563-residue protein sequence, read N- to C-terminus: Tripeptidyl-peptidase 1 (563 aa).

The signal sequence occupies residues methionine 1–cysteine 19. A propeptide spans threonine 20–glycine 195 (removed in mature form). An intrachain disulfide couples cysteine 111 to cysteine 122. A Peptidase S53 domain is found at glycine 199–proline 563. Asparagine 210 and asparagine 222 each carry an N-linked (GlcNAc...) asparagine glycan. Catalysis depends on charge relay system residues glutamate 272 and aspartate 276. N-linked (GlcNAc...) asparagine glycans are attached at residues asparagine 286, asparagine 313, and asparagine 443. 2 cysteine pairs are disulfide-bonded: cysteine 365–cysteine 526 and cysteine 522–cysteine 537. The active-site Charge relay system is the serine 475. Ca(2+) contacts are provided by aspartate 517 and valine 518. Ca(2+) contacts are provided by glycine 539, glycine 541, and aspartate 543.

In terms of assembly, monomer. Interacts with CLN5. Interacts with CLN3. It depends on Ca(2+) as a cofactor. In terms of processing, activated by autocatalytic proteolytical processing upon acidification. N-glycosylation is required for processing and activity.

The protein localises to the lysosome. It localises to the melanosome. It catalyses the reaction Release of an N-terminal tripeptide from a polypeptide, but also has endopeptidase activity.. Its function is as follows. Lysosomal serine protease with tripeptidyl-peptidase I activity. May act as a non-specific lysosomal peptidase which generates tripeptides from the breakdown products produced by lysosomal proteinases. Requires substrates with an unsubstituted N-terminus. The polypeptide is Tripeptidyl-peptidase 1 (Tpp1) (Rattus norvegicus (Rat)).